Reading from the N-terminus, the 284-residue chain is uncharacterized protein (284 aa).

3 consecutive transmembrane segments (helical) span residues 174-194, 217-237, and 241-261; these read LFVL…YISI, MLIP…PGTA, and LIVL…SGSC.

The protein localises to the membrane. This is an uncharacterized protein from Saccharomyces cerevisiae (strain ATCC 204508 / S288c) (Baker's yeast).